Consider the following 901-residue polypeptide: Desmocollin-2 (901 aa).

The N-terminal stretch at 1–27 (MEAARPSGSWNGALCRLLLLTLAILIF) is a signal peptide. Residues 28–135 (ASDACKNVTL…KEKVLRRAKR (108 aa)) constitute a propeptide that is removed on maturation. Residues Asn-34 and Asn-166 are each glycosylated (N-linked (GlcNAc...) asparagine). Cadherin domains lie at 136 to 243 (RWAP…YPIF), 244 to 355 (TEET…LPTF), 356 to 471 (TRTS…GPEC), 472 to 579 (NPPI…FIPK), and 580 to 694 (KTVI…QLGK). At 136–694 (RWAPIPCSML…IGGGGVQLGK (559 aa)) the chain is on the extracellular side. Asn-392 carries N-linked (GlcNAc...) (complex) asparagine glycosylation. Asn-546 and Asn-629 each carry an N-linked (GlcNAc...) asparagine glycan. Residues 695 to 715 (WAILAILLGIALLFCILFTLV) form a helical membrane-spanning segment. Residues 716-901 (CGASGTSKQP…RTLAEACMKR (186 aa)) lie on the Cytoplasmic side of the membrane. Phosphoserine occurs at positions 864, 868, and 873.

Interacts with DSP, PKP2 and JUP. Interacts with DSG3; the interaction may limit the interaction of DSC3 with p38MAPK family members and therefore repress p38MAPK signaling activation. In terms of tissue distribution, expressed at intercalated disks in the heart, where it is colocalized with CDH2 (at protein level). Expressed in intestinal mucosal cells (at protein level).

It is found in the cell membrane. The protein localises to the cell junction. It localises to the desmosome. Its function is as follows. A component of desmosome cell-cell junctions which are required for positive regulation of cellular adhesion. Promotes timely incorporation of DSG2 into desmosome intercellular junctions and promotes interaction of desmosome cell junctions with intermediate filament cytokeratin, via modulation of DSP phosphorylation. Plays an important role in desmosome-mediated maintenance of intestinal epithelial cell intercellular adhesion strength and barrier function. Positively regulates wound healing of intestinal mucosa via promotion of epithelial cell migration, and also plays a role in mechanotransduction of force between intestinal epithelial cells and extracellular matrix. May contribute to epidermal cell positioning (stratification) by mediating differential adhesiveness between cells that express different isoforms. May promote p38MAPK signaling activation that facilitates keratinocyte migration. The protein is Desmocollin-2 of Homo sapiens (Human).